Reading from the N-terminus, the 543-residue chain is Mannuronan C5-epimerase (543 aa).

Positions 1 to 35 are cleaved as a signal peptide; it reads MPDISLSIPRRRLPRLRPLAAAVLGAVLLHGQAWA. 7 PbH1 repeats span residues 243–270, 283–304, 305–327, 329–352, 354–376, 378–400, and 401–423; these read GAEV…SISQ, RPKG…YCYE, ADDL…DPHD, SHRL…IVSR, VNDS…VLDR, SEGN…TLYE, and SGDN…RVRN. Catalysis depends on His326, which acts as the Proton acceptor.

The protein belongs to the D-mannuronate C5-epimerase family.

It is found in the periplasm. The enzyme catalyses [(1-&gt;4)-beta-D-mannuronosyl](n) = [alginate](n). It functions in the pathway glycan biosynthesis; alginate biosynthesis. Inhibited by the presence of acetyl groups on the substrate. In terms of biological role, catalyzes the epimerization of beta-D-mannuronate to alpha-L-guluronate during the synthesis of the linear polysaccharide alginate. In addition, is part of a periplasmic protein complex that protects alginate from degradation by AlgL by channeling the newly formed alginate polymer through a scaffold that transfers the alginate polymer through the periplasmic space to the outer membrane secretin AlgE. The protein is Mannuronan C5-epimerase of Pseudomonas aeruginosa (strain ATCC 15692 / DSM 22644 / CIP 104116 / JCM 14847 / LMG 12228 / 1C / PRS 101 / PAO1).